Here is a 267-residue protein sequence, read N- to C-terminus: DNA repair protein RecO (267 aa).

This sequence belongs to the RecO family.

Its function is as follows. Involved in DNA repair and RecF pathway recombination. This chain is DNA repair protein RecO, found in Moorella thermoacetica (strain ATCC 39073 / JCM 9320).